Consider the following 125-residue polypeptide: Protein ApaG (125 aa).

An ApaG domain is found at Thr-3 to Asn-125.

This is Protein ApaG from Anaeromyxobacter dehalogenans (strain 2CP-C).